We begin with the raw amino-acid sequence, 123 residues long: Small ribosomal subunit protein uS12cz/uS12cy (123 aa).

This sequence belongs to the universal ribosomal protein uS12 family. As to quaternary structure, part of the 30S ribosomal subunit.

It is found in the plastid. Its subcellular location is the chloroplast. Functionally, with S4 and S5 plays an important role in translational accuracy. Located at the interface of the 30S and 50S subunits. The sequence is that of Small ribosomal subunit protein uS12cz/uS12cy (rps12-A) from Populus alba (White poplar).